We begin with the raw amino-acid sequence, 102 residues long: Large ribosomal subunit protein bL21 (102 aa).

Belongs to the bacterial ribosomal protein bL21 family. In terms of assembly, part of the 50S ribosomal subunit. Contacts protein L20.

This protein binds to 23S rRNA in the presence of protein L20. The sequence is that of Large ribosomal subunit protein bL21 from Pediococcus pentosaceus (strain ATCC 25745 / CCUG 21536 / LMG 10740 / 183-1w).